A 207-amino-acid chain; its full sequence is LexA repressor (207 aa).

Residues 28 to 48 (RAEIARELGFRSANAAEEHLK) constitute a DNA-binding region (H-T-H motif). Active-site for autocatalytic cleavage activity residues include S124 and K161.

Belongs to the peptidase S24 family. In terms of assembly, homodimer.

It catalyses the reaction Hydrolysis of Ala-|-Gly bond in repressor LexA.. Functionally, represses a number of genes involved in the response to DNA damage (SOS response), including recA and lexA. In the presence of single-stranded DNA, RecA interacts with LexA causing an autocatalytic cleavage which disrupts the DNA-binding part of LexA, leading to derepression of the SOS regulon and eventually DNA repair. In Aliivibrio salmonicida (strain LFI1238) (Vibrio salmonicida (strain LFI1238)), this protein is LexA repressor.